Reading from the N-terminus, the 328-residue chain is NADH-quinone oxidoreductase subunit H 2 (328 aa).

8 helical membrane-spanning segments follow: residues 3 to 23, 77 to 97, 119 to 139, 165 to 185, 191 to 211, 250 to 270, 272 to 292, and 307 to 327; these read LIVALGVIVFKVALVIAILLL, FLFKLAPILALAPPFVVFAAI, VALLFVFAVIGLEVYGVIFGG, MGFAVIGVVMLAQSMSLLDIV, VWNVVYQPIGFFVFFVAGLAE, MVLVSVLTVILFFGGWNGVLI, LPPLLWFLLKVAFFVYLFMWF, and IGWKVLLPLSLANIIISGVVF.

It belongs to the complex I subunit 1 family. In terms of assembly, NDH-1 is composed of 14 different subunits. Subunits NuoA, H, J, K, L, M, N constitute the membrane sector of the complex.

It is found in the cell inner membrane. The catalysed reaction is a quinone + NADH + 5 H(+)(in) = a quinol + NAD(+) + 4 H(+)(out). In terms of biological role, NDH-1 shuttles electrons from NADH, via FMN and iron-sulfur (Fe-S) centers, to quinones in the respiratory chain. The immediate electron acceptor for the enzyme in this species is believed to be ubiquinone. Couples the redox reaction to proton translocation (for every two electrons transferred, four hydrogen ions are translocated across the cytoplasmic membrane), and thus conserves the redox energy in a proton gradient. This subunit may bind ubiquinone. This chain is NADH-quinone oxidoreductase subunit H 2, found in Rhizobium meliloti (strain 1021) (Ensifer meliloti).